A 189-amino-acid polypeptide reads, in one-letter code: MYKEPLGVKVDFESGVIEGAKKLVRRLSDMKGYFLDEETWRELVEREDPVVYEVYAVEQEEKEGDLNFATTVLYPGKVGKEFFFTKGHFHAKRDRAEVYIALKGKGGMLLQTPEGEARWIPMEPGTVVYVPPYWAHRTVNTGDEPFIFLAIYPADAGHDYGTIAEKGFSKIVIEENGEVKVVDNPRWKN.

4 residues coordinate Fe cation: H88, H90, E97, and H136.

Belongs to the archaeal-type GPI family. Homodimer. Requires Fe cation as cofactor.

The protein resides in the cytoplasm. The enzyme catalyses alpha-D-glucose 6-phosphate = beta-D-fructose 6-phosphate. Its pathway is carbohydrate degradation; glycolysis; D-glyceraldehyde 3-phosphate and glycerone phosphate from D-glucose: step 2/4. The polypeptide is Glucose-6-phosphate isomerase (pgiA) (Pyrococcus horikoshii (strain ATCC 700860 / DSM 12428 / JCM 9974 / NBRC 100139 / OT-3)).